Here is a 196-residue protein sequence, read N- to C-terminus: Carnitine operon protein CaiE (196 aa).

The tract at residues 173-196 (TQPLRQMEENRPRLQGTTDVTPKR) is disordered. The segment covering 187-196 (QGTTDVTPKR) has biased composition (polar residues).

This sequence belongs to the transferase hexapeptide repeat family.

It functions in the pathway amine and polyamine metabolism; carnitine metabolism. Its function is as follows. Overproduction of CaiE stimulates the activity of CaiB and CaiD. The chain is Carnitine operon protein CaiE from Escherichia coli O6:K15:H31 (strain 536 / UPEC).